Here is a 387-residue protein sequence, read N- to C-terminus: 3-dehydroquinate synthase (387 aa).

The protein belongs to the archaeal-type DHQ synthase family.

The catalysed reaction is 2-amino-2,3,7-trideoxy-D-lyxo-hept-6-ulosonate + NAD(+) + H2O = 3-dehydroquinate + NH4(+) + NADH + H(+). Catalyzes the oxidative deamination and cyclization of 2-amino-3,7-dideoxy-D-threo-hept-6-ulosonic acid (ADH) to yield 3-dehydroquinate (DHQ), which is fed into the canonical shikimic pathway of aromatic amino acid biosynthesis. The sequence is that of 3-dehydroquinate synthase from Halobacterium salinarum (strain ATCC 29341 / DSM 671 / R1).